An 82-amino-acid polypeptide reads, in one-letter code: UPF0337 protein PP_2059 (82 aa).

This sequence belongs to the UPF0337 (CsbD) family.

The chain is UPF0337 protein PP_2059 from Pseudomonas putida (strain ATCC 47054 / DSM 6125 / CFBP 8728 / NCIMB 11950 / KT2440).